An 82-amino-acid chain; its full sequence is Cytochrome c-551 (82 aa).

Residues Cys12, Cys15, His16, and Met61 each contribute to the heme c site.

Binds 1 heme c group covalently per subunit.

This chain is Cytochrome c-551, found in Azotobacter vinelandii.